A 130-amino-acid chain; its full sequence is Phosphoribosyl-AMP cyclohydrolase (130 aa).

Position 77 (Asp-77) interacts with Mg(2+). Cys-78 is a Zn(2+) binding site. Mg(2+) contacts are provided by Asp-79 and Asp-81. Zn(2+) contacts are provided by Cys-95 and Cys-102.

It belongs to the PRA-CH family. As to quaternary structure, homodimer. Mg(2+) is required as a cofactor. It depends on Zn(2+) as a cofactor.

It localises to the cytoplasm. It carries out the reaction 1-(5-phospho-beta-D-ribosyl)-5'-AMP + H2O = 1-(5-phospho-beta-D-ribosyl)-5-[(5-phospho-beta-D-ribosylamino)methylideneamino]imidazole-4-carboxamide. It participates in amino-acid biosynthesis; L-histidine biosynthesis; L-histidine from 5-phospho-alpha-D-ribose 1-diphosphate: step 3/9. In terms of biological role, catalyzes the hydrolysis of the adenine ring of phosphoribosyl-AMP. This chain is Phosphoribosyl-AMP cyclohydrolase, found in Pseudomonas entomophila (strain L48).